The sequence spans 570 residues: Urease subunit alpha (570 aa).

In terms of domain architecture, Urease spans Gly-131–Phe-570. Positions 136, 138, and 219 each coordinate Ni(2+). At Lys-219 the chain carries N6-carboxylysine. His-221 serves as a coordination point for substrate. Ni(2+)-binding residues include His-248 and His-274. The active-site Proton donor is His-322. Asp-362 is a Ni(2+) binding site.

The protein belongs to the metallo-dependent hydrolases superfamily. Urease alpha subunit family. In terms of assembly, heterotrimer of UreA (gamma), UreB (beta) and UreC (alpha) subunits. Three heterotrimers associate to form the active enzyme. Requires Ni cation as cofactor. Carboxylation allows a single lysine to coordinate two nickel ions.

Its subcellular location is the cytoplasm. The enzyme catalyses urea + 2 H2O + H(+) = hydrogencarbonate + 2 NH4(+). Its pathway is nitrogen metabolism; urea degradation; CO(2) and NH(3) from urea (urease route): step 1/1. This is Urease subunit alpha from Beijerinckia indica subsp. indica (strain ATCC 9039 / DSM 1715 / NCIMB 8712).